Reading from the N-terminus, the 240-residue chain is uncharacterized protein (240 aa).

Basic residues predominate over residues 1–11 (MGMTPRRKRRG). A disordered region spans residues 1–32 (MGMTPRRKRRGGAVQITRPTGRPRTPTTQTTK). Residues 17 to 31 (TRPTGRPRTPTTQTT) are compositionally biased toward low complexity. Helical transmembrane passes span 36 to 56 (WVVGGTTILTFVALLYLVELI), 93 to 113 (LMANTIPLLVLGFLMTLAGLS), 115 to 135 (FVWATAIIWILGGLGTWLIGN), 146 to 166 (IGASGLIFGWLAFLLVFGLFV), 172 to 192 (IVIGLVVLFVYGGILLGAMPV), and 198 to 218 (GVSWQGHLSGAVAGVVAAYLL).

To M.leprae ML1171.

It is found in the cell membrane. This is an uncharacterized protein from Mycobacterium tuberculosis (strain CDC 1551 / Oshkosh).